The chain runs to 353 residues: Paraneoplastic antigen Ma1 (353 aa).

The protein belongs to the PNMA family. As to expression, testis- and brain-specific. In some cancer patients, specifically expressed by paraneoplastic tumor cells.

It is found in the nucleus. Its subcellular location is the nucleolus. This chain is Paraneoplastic antigen Ma1 (PNMA1), found in Homo sapiens (Human).